Here is a 385-residue protein sequence, read N- to C-terminus: Suppressor protein STP22 of temperature-sensitive alpha-factor receptor and arginine permease (385 aa).

One can recognise a UEV domain in the interval 12–161 (AVVNWLFKVI…LHEPPQDQAP (150 aa)). Residues 155 to 219 (PPQDQAPSLP…DMDNTDISPT (65 aa)) are disordered. The segment covering 168–177 (NTQLQQEQNT) has biased composition (polar residues). The span at 178–201 (PPLPPKPKSPHLKPPLPPPPPPQP) shows a compositional bias: pro residues. A coiled-coil region spans residues 272–300 (LRAVEQAIEQTMHSLNAQIDVLTANRAKV). Residues 322–385 (TDGLNQLYNL…HIQRITSPLS (64 aa)) form the SB domain.

Belongs to the ubiquitin-conjugating enzyme family. UEV subfamily. As to quaternary structure, component of the ESCRT-I complex (endosomal sorting complex required for transport I) which consists of STP22, VPS28, SRN2 and MVB12 in a 1:1:1:1 stoichiometry. Interacts with HSE1 and VPS27. Interacts with MVB12 and SRN2.

The protein resides in the cytoplasm. Its subcellular location is the endosome. It is found in the late endosome membrane. Component of the ESCRT-I complex, a regulator of vesicular trafficking process. Binds to ubiquitinated cargo proteins and is required for the sorting of endocytic ubiquitinated cargos into multivesicular bodies (MVBs). Mediates the association to the ESCRT-0 complex. Required for vacuolar targeting of temperature-sensitive plasma membrane proteins STE2 and CAN1. The polypeptide is Suppressor protein STP22 of temperature-sensitive alpha-factor receptor and arginine permease (STP22) (Saccharomyces cerevisiae (strain ATCC 204508 / S288c) (Baker's yeast)).